We begin with the raw amino-acid sequence, 564 residues long: MTKFVFVTGGVVSSLGKGIAAASLAALLETRGIRVTILKLDPYINVDPGTMNPFQHGEVFVTDDGAETDLDLGHYERFISTKMTRQNNFTTGQIYESVIRKERRGDYLGGTVQVIPHITDEIKLFIRNGVSDAQVAIVEIGGTVGDIESLPFLEAIRQMSVQLPHHDTCFIHLTLLPYISSAGELKTKPTQHSVKELREIGIQPDVLLCRSDRPLPLEERRKIALFTNVREESVISAIDVDNIYKIPALLHEQMLDEIVCHRLDILARPANLTVWKKLVHALEHPEHEVSIALVGKYVDLTESYKSLSEALIHAGIHTRCKINIHYIDSENIEQHGTGCLTNMDAILVPGGFGKRGVEGKIMAISYARNHRIPYLGICLGMQLAVIEFSRNRLQLENAHSTEFDPDTPYPVLGLITEWRDRCGRVEKRSAQTDLGGTMRLGGQECLLKPHTLAHKIYGADKVIERHRHRYEVNAEFIPQLEQAGMHISGLSAEGDLCEMIELPQSEHPWFVACQFHPEFTSTPRNGHPLFKSYIQAAISFAGQSDRTKLHSRNVQESVTTDSSN.

Residues 1-265 (MTKFVFVTGG…DEIVCHRLDI (265 aa)) form an amidoligase domain region. Ser13 is a binding site for CTP. Ser13 contributes to the UTP binding site. ATP-binding positions include 14–19 (SLGKGI) and Asp71. Mg(2+) is bound by residues Asp71 and Glu139. CTP-binding positions include 146-148 (DIE), 186-191 (KTKPTQ), and Lys222. UTP contacts are provided by residues 186–191 (KTKPTQ) and Lys222. A Glutamine amidotransferase type-1 domain is found at 290–543 (SIALVGKYVD…IQAAISFAGQ (254 aa)). Gly351 is a binding site for L-glutamine. Catalysis depends on Cys378, which acts as the Nucleophile; for glutamine hydrolysis. L-glutamine-binding positions include 379–382 (LGMQ), Glu402, and Arg469. Active-site residues include His516 and Glu518.

This sequence belongs to the CTP synthase family. As to quaternary structure, homotetramer.

The enzyme catalyses UTP + L-glutamine + ATP + H2O = CTP + L-glutamate + ADP + phosphate + 2 H(+). The catalysed reaction is L-glutamine + H2O = L-glutamate + NH4(+). It carries out the reaction UTP + NH4(+) + ATP = CTP + ADP + phosphate + 2 H(+). It functions in the pathway pyrimidine metabolism; CTP biosynthesis via de novo pathway; CTP from UDP: step 2/2. With respect to regulation, allosterically activated by GTP, when glutamine is the substrate; GTP has no effect on the reaction when ammonia is the substrate. The allosteric effector GTP functions by stabilizing the protein conformation that binds the tetrahedral intermediate(s) formed during glutamine hydrolysis. Inhibited by the product CTP, via allosteric rather than competitive inhibition. Catalyzes the ATP-dependent amination of UTP to CTP with either L-glutamine or ammonia as the source of nitrogen. Regulates intracellular CTP levels through interactions with the four ribonucleotide triphosphates. This chain is CTP synthase, found in Nitrosomonas europaea (strain ATCC 19718 / CIP 103999 / KCTC 2705 / NBRC 14298).